We begin with the raw amino-acid sequence, 53 residues long: Large ribosomal subunit protein bL33A (53 aa).

This sequence belongs to the bacterial ribosomal protein bL33 family.

The chain is Large ribosomal subunit protein bL33A (rpmG1) from Mycoplasma pneumoniae (strain ATCC 29342 / M129 / Subtype 1) (Mycoplasmoides pneumoniae).